The chain runs to 270 residues: tRNA pseudouridine synthase A (270 aa).

The Nucleophile role is filled by Asp60. Residues 107-111 (FHARF) are RNA binding. Residue Tyr118 participates in substrate binding. The interaction with tRNA stretch occupies residues 168–172 (QCQSR).

This sequence belongs to the tRNA pseudouridine synthase TruA family. In terms of assembly, homodimer.

It carries out the reaction uridine(38/39/40) in tRNA = pseudouridine(38/39/40) in tRNA. In terms of biological role, formation of pseudouridine at positions 38, 39 and 40 in the anticodon stem and loop of transfer RNAs. The protein is tRNA pseudouridine synthase A of Shigella boydii serotype 4 (strain Sb227).